The primary structure comprises 594 residues: Aspartate--tRNA(Asp/Asn) ligase (594 aa).

L-aspartate is bound at residue E175. Residues 199 to 202 (QQLK) form an aspartate region. R221 provides a ligand contact to L-aspartate. ATP contacts are provided by residues 221–223 (RDE) and Q230. H450 contributes to the L-aspartate binding site. Position 485 (E485) interacts with ATP. An L-aspartate-binding site is contributed by R492. 537 to 540 (GIDR) contributes to the ATP binding site.

This sequence belongs to the class-II aminoacyl-tRNA synthetase family. Type 1 subfamily. As to quaternary structure, homodimer.

Its subcellular location is the cytoplasm. The enzyme catalyses tRNA(Asx) + L-aspartate + ATP = L-aspartyl-tRNA(Asx) + AMP + diphosphate. In terms of biological role, aspartyl-tRNA synthetase with relaxed tRNA specificity since it is able to aspartylate not only its cognate tRNA(Asp) but also tRNA(Asn). Reaction proceeds in two steps: L-aspartate is first activated by ATP to form Asp-AMP and then transferred to the acceptor end of tRNA(Asp/Asn). This is Aspartate--tRNA(Asp/Asn) ligase from Herpetosiphon aurantiacus (strain ATCC 23779 / DSM 785 / 114-95).